The sequence spans 353 residues: GTPase Obg (353 aa).

Positions 1 to 159 (MKFLDEAKVY…RWIWLRLKLI (159 aa)) constitute an Obg domain. The OBG-type G domain maps to 160-327 (ADAGLVGLPN…ALRALAAVIG (168 aa)). GTP is bound by residues 166 to 173 (GLPNAGKS), 191 to 195 (FTTLH), 212 to 215 (DIPG), 279 to 282 (NKID), and 308 to 310 (SGV). Mg(2+) is bound by residues S173 and T193.

Belongs to the TRAFAC class OBG-HflX-like GTPase superfamily. OBG GTPase family. Monomer. It depends on Mg(2+) as a cofactor.

Its subcellular location is the cytoplasm. An essential GTPase which binds GTP, GDP and possibly (p)ppGpp with moderate affinity, with high nucleotide exchange rates and a fairly low GTP hydrolysis rate. Plays a role in control of the cell cycle, stress response, ribosome biogenesis and in those bacteria that undergo differentiation, in morphogenesis control. This chain is GTPase Obg, found in Rhodopseudomonas palustris (strain BisB5).